The sequence spans 242 residues: Glutathione S-transferase 3 (242 aa).

Positions 1–79 constitute a GST N-terminal domain; that stretch reads MIVLHHLKNS…HLVRKYGPSF (79 aa). One can recognise a GST C-terminal domain in the interval 85 to 234; sequence DVAELEKYEL…ERYSHPPTPP (150 aa). Phosphoserine is present on Ser-228. Phosphothreonine is present on Thr-232.

The protein belongs to the GST superfamily. Interacts with sad1.

The protein localises to the cytoplasm. It carries out the reaction RX + glutathione = an S-substituted glutathione + a halide anion + H(+). May have a role in the detoxification of various heavy metals. The polypeptide is Glutathione S-transferase 3 (gst3) (Schizosaccharomyces pombe (strain 972 / ATCC 24843) (Fission yeast)).